The primary structure comprises 211 residues: Beta-crystallin B3 (211 aa).

M1 carries the N-acetylmethionine modification. A2 is subject to N-acetylalanine; in Beta-crystallin B3, N-terminally processed. An N-terminal arm region spans residues 2–23; that stretch reads AEQHGAPEQAAASKSHGGLGGS. 2 Beta/gamma crystallin 'Greek key' domains span residues 24 to 63 and 64 to 108; these read YKVTVYELENFQGKRCELSAECPNLTESLLQKVGSIQVES and GPWL…RPLH. A connecting peptide region spans residues 109-113; the sequence is IDGPD. Beta/gamma crystallin 'Greek key' domains lie at 114-155 and 156-198; these read HKLH…RVIN and GTWV…RRIR. The C-terminal arm stretch occupies residues 200–211; it reads QKWHKRGCFLSS.

It belongs to the beta/gamma-crystallin family. Homo/heterodimer, or complexes of higher-order. The structure of beta-crystallin oligomers seems to be stabilized through interactions between the N-terminal arms.

Crystallins are the dominant structural components of the vertebrate eye lens. This Rattus norvegicus (Rat) protein is Beta-crystallin B3 (Crybb3).